The primary structure comprises 343 residues: Putative adenosine/adenine deaminase (343 aa).

Zn(2+) contacts are provided by His-16, His-18, and His-204. Residue His-18 participates in substrate binding. Glu-207 serves as the catalytic Proton donor. Asp-285 contributes to the Zn(2+) binding site. Asp-286 serves as a coordination point for substrate.

It belongs to the metallo-dependent hydrolases superfamily. Adenosine and AMP deaminases family. The cofactor is Zn(2+).

Putative nucleoside deaminase. May catalyze the hydrolytic deamination of adenosine or some similar substrate and play a role in purine metabolism. The sequence is that of Putative adenosine/adenine deaminase from Streptomyces coelicolor (strain ATCC BAA-471 / A3(2) / M145).